The sequence spans 240 residues: Ribosome maturation protein SDO1 homolog (240 aa).

This sequence belongs to the SDO1/SBDS family.

This chain is Ribosome maturation protein SDO1 homolog, found in Methanocaldococcus jannaschii (strain ATCC 43067 / DSM 2661 / JAL-1 / JCM 10045 / NBRC 100440) (Methanococcus jannaschii).